The primary structure comprises 235 residues: Ubiquinone/menaquinone biosynthesis C-methyltransferase UbiE (235 aa).

Threonine 59, aspartate 84, and serine 123 together coordinate S-adenosyl-L-methionine.

It belongs to the class I-like SAM-binding methyltransferase superfamily. MenG/UbiE family.

The catalysed reaction is a 2-demethylmenaquinol + S-adenosyl-L-methionine = a menaquinol + S-adenosyl-L-homocysteine + H(+). It carries out the reaction a 2-methoxy-6-(all-trans-polyprenyl)benzene-1,4-diol + S-adenosyl-L-methionine = a 5-methoxy-2-methyl-3-(all-trans-polyprenyl)benzene-1,4-diol + S-adenosyl-L-homocysteine + H(+). It participates in quinol/quinone metabolism; menaquinone biosynthesis; menaquinol from 1,4-dihydroxy-2-naphthoate: step 2/2. Its pathway is cofactor biosynthesis; ubiquinone biosynthesis. In terms of biological role, methyltransferase required for the conversion of demethylmenaquinol (DMKH2) to menaquinol (MKH2) and the conversion of 2-polyprenyl-6-methoxy-1,4-benzoquinol (DDMQH2) to 2-polyprenyl-3-methyl-6-methoxy-1,4-benzoquinol (DMQH2). This chain is Ubiquinone/menaquinone biosynthesis C-methyltransferase UbiE, found in Campylobacter jejuni subsp. jejuni serotype O:6 (strain 81116 / NCTC 11828).